The chain runs to 43 residues: Protein PsbN (43 aa).

The helical transmembrane segment at V7 to F27 threads the bilayer.

It belongs to the PsbN family.

It is found in the plastid. The protein localises to the chloroplast thylakoid membrane. Functionally, may play a role in photosystem I and II biogenesis. This is Protein PsbN from Sagittaria latifolia (Broadleaf arrowhead).